We begin with the raw amino-acid sequence, 822 residues long: Nuclear factor of activated T-cells, cytoplasmic 1 (822 aa).

The tract at residues 110–115 (PRIEIT) is calcineurin-binding. A transactivation domain A (TAD-A) region spans residues 118 to 210 (LGLHHNNGQF…CVSPKTTDPE (93 aa)). Over residues 192 to 206 (PQTSPWQSPCVSPKT) the composition is skewed to polar residues. The tract at residues 192–289 (PQTSPWQSPC…HSSPRVSVTD (98 aa)) is disordered. Repeat copies occupy residues 195-211 (SPWQ…DPEE) and 225-241 (SPRH…VTEE). The interval 195-290 (SPWQSPCVSP…SSPRVSVTDD (96 aa)) is 3 X SP repeats. 2 positions are modified to phosphoserine: Ser225 and Ser229. Residues 225 to 242 (SPRHSPSTSPRTSVTEES) are compositionally biased toward low complexity. Ser237 is subject to Phosphoserine; by PKA. Residues 257–259 (KRK) carry the Nuclear localization signal motif. Repeat unit 3 spans residues 274–290 (SPTPSPHSSPRVSVTDD). Residue Ser286 is modified to Phosphoserine; by PKA. Residues 302–313 (SAIVAAINALST) carry the Nuclear export signal motif. Residues 400–582 (PSLPALDWQL…NPIECSQRSA (183 aa)) form the RHD domain. Residues 429 to 436 (RAHYETEG) mediate DNA binding. The Nuclear localization signal signature appears at 672-674 (KRK). The segment at 772–822 (GPGHLGLQRPAGGVLGGQEAPRPGGPHPGAPQLHPLNLSQSIVTRLTEPQP) is disordered. Polar residues predominate over residues 808-822 (NLSQSIVTRLTEPQP).

In terms of assembly, member of the multicomponent NFATC transcription complex that consists of at least two components, a pre-existing cytoplasmic component NFATC2 and an inducible nuclear component NFATC1. Other members such as NFATC4, NFATC3 or members of the activating protein-1 family, MAF, GATA4 and Cbp/p300 can also bind the complex. NFATC proteins bind to DNA as monomers. Interacts with HOMER2 and HOMER3; this interaction may compete with calcineurin/PPP3CA-binding and hence prevent NFATC1 dephosphorylation and activation. Interacts with TLE6/GRG6. Phosphorylated by NFATC-kinase and GSK3B; phosphorylation induces NFATC1 nuclear exit and dephosphorylation by calcineurin promotes nuclear import. Phosphorylation by PKA and DYRK2 negatively modulates nuclear accumulation, and promotes subsequent phosphorylation by GSK3B or casein kinase 1.

It localises to the cytoplasm. The protein resides in the nucleus. Its function is as follows. Plays a role in the inducible expression of cytokine genes in T-cells, especially in the induction of the IL-2 or IL-4 gene transcription. Also controls gene expression in embryonic cardiac cells. Could regulate not only the activation and proliferation but also the differentiation and programmed death of T-lymphocytes as well as lymphoid and non-lymphoid cells. Required for osteoclastogenesis and regulates many genes important for osteoclast differentiation and function. The protein is Nuclear factor of activated T-cells, cytoplasmic 1 (NFATC1) of Sus scrofa (Pig).